The sequence spans 358 residues: uncharacterized protein (358 aa).

Residues 70-88 (RPAATAGTTPATGASGSAR) are compositionally biased toward low complexity. Positions 70–93 (RPAATAGTTPATGASGSARPTDAA) are disordered. Residues 178 to 353 (PSTCRGDNVS…AFSAAIQAGE (176 aa)) enclose the Macro domain.

This is an uncharacterized protein from Mycobacterium bovis (strain ATCC BAA-935 / AF2122/97).